A 981-amino-acid chain; its full sequence is Echinoderm microtubule-associated protein-like 4 (981 aa).

Methionine 1 carries the post-translational modification N-acetylmethionine. Disordered regions lie at residues 1 to 20 and 57 to 205; these read MDGF…TSDV and DHVA…PKLI. The segment at 1-249 is microtubule-binding; the sequence is MDGFAGSLDD…IPSDVDNYDD (249 aa). Phosphoserine is present on residues serine 7, serine 13, serine 16, and serine 61. The stretch at 14–63 forms a coiled coil; that stretch reads AASTSDVQDRLSALESRVQQQEDEITVLKAALADVLRRLAISEDHVASVK. Phosphothreonine is present on threonine 96. Basic and acidic residues predominate over residues 114-134; sequence GTEKKKEKPQGQREKKEESHS. Phosphoserine; by NEK7 is present on serine 134. Low complexity predominate over residues 137 to 155; the sequence is QSPQIRASPSPQPSSQPLQ. Serine 144 is subject to Phosphoserine; by NEK6. Position 146 is a phosphoserine; by NEK7 (serine 146). At serine 171 the chain carries Phosphoserine. The span at 176 to 193 shows a compositional bias: basic and acidic residues; it reads SPAEKSHNSWENSDDSRN. Serine 200 is subject to Phosphoserine. Threonine 201 carries the phosphothreonine modification. At tyrosine 226 the chain carries Phosphotyrosine. Threonine 237 carries the post-translational modification Phosphothreonine. WD repeat units lie at residues 259 to 297, 301 to 348, 356 to 396, 403 to 438, and 445 to 484; these read LKLE…LFNY, TQRH…VWDS, IIGL…VWDW, AEIK…FWTW, and RKQG…IWSK. Threonine 490 carries the phosphothreonine; by NEK6 modification. WD repeat units follow at residues 500 to 538, 543 to 579, 582 to 621, 625 to 662, 668 to 704, 711 to 750, 760 to 818, and 825 to 864; these read QISK…LWDH, EREI…LRGT, DGFQ…LWNS, RLEW…VLDA, VSIH…LYVV, YSRY…YWDI, RSDC…LFQY, and APSH…QWKL. Residue threonine 609 is modified to Phosphothreonine; by NEK6 and NEK7. The segment covering 881-893 has biased composition (polar residues); it reads LTKAPVSSTESVI. The disordered stretch occupies residues 881 to 981; sequence LTKAPVSSTE…EDQQDPSPSS (101 aa). A phosphoserine mark is found at serine 891 and serine 895. A phosphothreonine mark is found at threonine 897 and threonine 899. A Phosphoserine modification is found at serine 903. Residues 916 to 931 show a composition bias toward polar residues; the sequence is ISSSPTLLENSLEQTV. Over residues 937 to 946 the composition is skewed to acidic residues; it reads HSEEESEEGS. The residue at position 978 (serine 978) is a Phosphoserine. Position 981 is a phosphoserine; by NEK6 and NEK7 (serine 981).

This sequence belongs to the WD repeat EMAP family. As to quaternary structure, homotrimer; self-association is mediated by the N-terminal coiled coil. Interacts (via WD repeats) with NUDC. Interacts with alpha- and beta-tubulin during mitosis. Phosphorylated during mitosis. Phosphorylation at Ser-144 and Ser-146 promotes its dissociation from microtubules during mitosis which is required for efficient chromosome congression.

The protein localises to the cytoplasm. It is found in the cytoskeleton. The protein resides in the spindle. Its subcellular location is the microtubule organizing center. It localises to the midbody. In terms of biological role, essential for the formation and stability of microtubules (MTs). Required for the organization of the mitotic spindle and for the proper attachment of kinetochores to MTs. Promotes the recruitment of NUDC to the mitotic spindle for mitotic progression. This chain is Echinoderm microtubule-associated protein-like 4 (EML4), found in Homo sapiens (Human).